The sequence spans 104 residues: Putative ankyrin repeat protein L677 (104 aa).

ANK repeat units follow at residues 16–43 (FNKSSLEIACIENDIGTVKKIINLNPNL), 44–73 (DISHCLNLAIESKNYQIVKFLLKKNISNSV), and 75–102 (LEAYDCACINGKISIMELLIQYLNNKSI).

In Acanthamoeba polyphaga (Amoeba), this protein is Putative ankyrin repeat protein L677.